A 299-amino-acid polypeptide reads, in one-letter code: Acetylglutamate kinase (299 aa).

Substrate is bound by residues 72 to 73, Arg-94, and Asn-196; that span reads GG.

Belongs to the acetylglutamate kinase family. ArgB subfamily.

The protein localises to the cytoplasm. It carries out the reaction N-acetyl-L-glutamate + ATP = N-acetyl-L-glutamyl 5-phosphate + ADP. Its pathway is amino-acid biosynthesis; L-arginine biosynthesis; N(2)-acetyl-L-ornithine from L-glutamate: step 2/4. Catalyzes the ATP-dependent phosphorylation of N-acetyl-L-glutamate. This is Acetylglutamate kinase from Burkholderia ambifaria (strain MC40-6).